A 661-amino-acid chain; its full sequence is MANRSIRDGDNPELLEERRMATFDTDKMAAVIYGSEEFARRRREITDAVSKIPELADIKPYPFLTREEKVTEGTRKISILTKYLNQLIDRDNEEESLHLHREVIGYEGHPFALHDALFIPTLQSQASDEQQEKWLERARRREIIGCYAQTELGHGSNLRNLETTAVYDIASQEFVLHTPTTTALKWWPGALGKSCNYALVVAELIIKRNNYGPHFFMVQLRDEKTHIPLKGVTVGDIGPKMNFNAADNGYLGLNNLRVPRTNLLMRHCKVEADGTYVKPPHAKIGYSGMVKIRSQMAMEQGLFLAHALTIAARYSAVRRQGHLDDKQVEVKVLDYQTQQHRLFPSLARAYAFIFTGFETIHLYSQLLKDVDMGNTSGMADLHALTSGLKSVVAHETGEGIEQARMACGGHGYSMASYISVVYGIAIGGCTYEGENMVMLLQLARYLVKSVELIKAGKAKKLGPVASYLADKSDETDLTSLNGYVKMFENMARRQAWKATEKFLKLMESGESREVAWNKSAVELTRASRLHTRLFIIEAFMRRVSRIEDIPVKEVLTDLLHLHVNYELLDVATYALEFMSFTQLDYVRDQLYLYLEKIRPNAVSLVDSFQISDMQLRSVLGRRDGHVYENLFKWAKSSPLNNADVLPSVEKYLKPMMEKAKL.

Residues 147–150 (YAQT), 155–156 (GS), and Gly-189 contribute to the FAD site. Substrate contacts are provided by residues 283 to 286 (KIGY) and Arg-293. FAD contacts are provided by residues Arg-318 and 338-341 (QQHR). His-340, Ser-390, His-394, and Gln-402 together coordinate ATP. FAD is bound at residue Gly-409. 431-432 (YE) contributes to the substrate binding site. Glu-432 serves as the catalytic Proton acceptor. Glu-434 provides a ligand contact to FAD. Residues 525-528 (RASR) and Tyr-573 each bind ATP. Positions 659-661 (AKL) match the Microbody targeting signal motif.

The protein belongs to the acyl-CoA oxidase family. In terms of assembly, homodimer. Forms a heterodimer with acox-1.1. FAD serves as cofactor.

It is found in the peroxisome. It carries out the reaction asc-omegaC5-CoA + O2 = asc-omegaDeltaC5-CoA + H2O2. It functions in the pathway lipid metabolism; peroxisomal fatty acid beta-oxidation. Its activity is regulated as follows. Activated by ATP. ATP binding leads to a conformational change that promotes FAD cofactor binding and enzyme activity. ATP binding likely occurs during acox-1.2 folding and/or dimer formation. The preference for processing substrates with shorter fatty acid chains is likely due to the closed conformation of the active site. Functionally, involved in the first step of peroxisomal beta-oxidation by catalyzing the desaturation of fatty acid-derived side chains of ascaroside pheromones, which regulates development and behavior. Specifically, shortens ascarosides with 5-carbon omega side chain (asc-omega-C5). Does not shorten indol-3-carbonyl(IC)-ascaroside with 7-carbon or 9-carbon side chains. Does not catalyze the desaturation of fatty acids or hydroxylated fatty acids. This Caenorhabditis elegans protein is Acyl-coenzyme A oxidase acox-1.2.